The sequence spans 424 residues: tRNA(Met) cytidine acetate ligase (424 aa).

Residues 7-20 (ITEY…HLHH), Gly-102, Asn-174, and Arg-199 contribute to the ATP site.

The protein belongs to the TmcAL family.

The protein localises to the cytoplasm. It catalyses the reaction cytidine(34) in elongator tRNA(Met) + acetate + ATP = N(4)-acetylcytidine(34) in elongator tRNA(Met) + AMP + diphosphate. Its function is as follows. Catalyzes the formation of N(4)-acetylcytidine (ac(4)C) at the wobble position of elongator tRNA(Met), using acetate and ATP as substrates. First activates an acetate ion to form acetyladenylate (Ac-AMP) and then transfers the acetyl group to tRNA to form ac(4)C34. The polypeptide is tRNA(Met) cytidine acetate ligase (Alkaliphilus metalliredigens (strain QYMF)).